Reading from the N-terminus, the 217-residue chain is Uridylate kinase (217 aa).

Residue 6 to 10 (KLSGR) participates in ATP binding. Residue Gly38 coordinates UMP. The ATP site is built by Gly39 and Arg43. UMP contacts are provided by residues Asp60 and 107–113 (FQPGQST). 3 residues coordinate ATP: Asn134, Tyr139, and Asp142.

The protein belongs to the UMP kinase family. In terms of assembly, homohexamer.

Its subcellular location is the cytoplasm. The catalysed reaction is UMP + ATP = UDP + ADP. It functions in the pathway pyrimidine metabolism; CTP biosynthesis via de novo pathway; UDP from UMP (UMPK route): step 1/1. With respect to regulation, inhibited by UTP. Functionally, catalyzes the reversible phosphorylation of UMP to UDP. The polypeptide is Uridylate kinase (Pyrobaculum neutrophilum (strain DSM 2338 / JCM 9278 / NBRC 100436 / V24Sta) (Thermoproteus neutrophilus)).